Consider the following 241-residue polypeptide: Glutathione S-transferase omega-1 (241 aa).

S2 bears the N-acetylserine mark. The GST N-terminal domain occupies 22–101 (GLIRVYSMRF…YLDEAYPGKK (80 aa)). The Nucleophile role is filled by C32. K57 carries the post-translational modification N6-acetyllysine. Glutathione-binding positions include K59, V72, and 85–86 (ES). The GST C-terminal domain occupies 106–225 (DPYEKACQKM…HIEPRDLRAF (120 aa)). N6-acetyllysine occurs at positions 143, 148, and 152.

In terms of assembly, homodimer. As to expression, most abundant in the liver and skeletal muscle; also expressed in heart, diaphragm, colon, thymus, kidney, lung, ovaries, spleen, intestine and pancreas.

It is found in the cytoplasm. Its subcellular location is the cytosol. The catalysed reaction is RX + glutathione = an S-substituted glutathione + a halide anion + H(+). The enzyme catalyses L-dehydroascorbate + 2 glutathione = glutathione disulfide + L-ascorbate. It catalyses the reaction methylarsonate + 2 glutathione + H(+) = methylarsonous acid + glutathione disulfide + H2O. Exhibits glutathione-dependent thiol transferase and dehydroascorbate reductase activities. Has S-(phenacyl)glutathione reductase activity. Also has glutathione S-transferase activity. Participates in the biotransformation of inorganic arsenic and reduces monomethylarsonic acid (MMA) and dimethylarsonic acid. The sequence is that of Glutathione S-transferase omega-1 (GSTO1) from Sus scrofa (Pig).